A 315-amino-acid polypeptide reads, in one-letter code: Glutamyl-Q tRNA(Asp) synthetase (315 aa).

Residues Arg12–Ser16 and Glu48 contribute to the L-glutamate site. The short motif at Pro15–Ser25 is the 'HIGH' region element. Residues Cys104, Cys106, Tyr124, and Cys128 each contribute to the Zn(2+) site. The L-glutamate site is built by Tyr181 and Arg199. The short motif at Lys237–Gln241 is the 'KMSKS' region element. Residue Lys240 participates in ATP binding.

The protein belongs to the class-I aminoacyl-tRNA synthetase family. GluQ subfamily. Requires Zn(2+) as cofactor.

Its function is as follows. Catalyzes the tRNA-independent activation of glutamate in presence of ATP and the subsequent transfer of glutamate onto a tRNA(Asp). Glutamate is transferred on the 2-amino-5-(4,5-dihydroxy-2-cyclopenten-1-yl) moiety of the queuosine in the wobble position of the QUC anticodon. This chain is Glutamyl-Q tRNA(Asp) synthetase, found in Aromatoleum aromaticum (strain DSM 19018 / LMG 30748 / EbN1) (Azoarcus sp. (strain EbN1)).